A 462-amino-acid polypeptide reads, in one-letter code: BBSome complex member bbs-4 (462 aa).

The interval 1-46 (MEASNQDEIIGTDVIPNEQDNPEEVVPEPTSLDVPPPPPERAPSAP) is disordered. 7 TPR repeats span residues 89-122 (EAAF…SGKN), 124-156 (RYFY…MKDN), 199-232 (ATLI…QPDN), 234-266 (EVMN…DPAN), 268-300 (QAIL…SDYN), 335-368 (YKIS…YPQN), and 369-402 (AKAV…KKNP).

It belongs to the BBS4 family. In terms of assembly, part of BBSome complex, that contains at least bbs-1, bbs-2, bbs-4, bbs-5, osm-12, bbs-8/ttc-8 and bbs-9. Interacts (via C-terminus) with bbs-5; the interaction is direct.

Its subcellular location is the cytoplasm. It localises to the cytoskeleton. The protein localises to the microtubule organizing center. The protein resides in the centrosome. It is found in the cell projection. Its subcellular location is the cilium membrane. Functionally, component of the BBSome complex. The BBSome complex is thought to function as a coat complex required for sorting of specific membrane proteins to the primary cilia. The BBSome complex is required for ciliogenesis but is dispensable for centriolar satellite function. Required for proper BBSome complex assembly and its ciliary localization. May be required for microtubule anchoring at the centrosome but not for microtubule nucleation. May be required for the dynein-mediated transport of pericentriolar proteins to the centrosome. Required, redundantly with bbs-5, for cilia biogenesis and both the assembly and movement of intraflagellar transport proteins along the ciliary axoneme. Plays a role in the removal of degraded mechanosensory receptors within the cilia. The polypeptide is BBSome complex member bbs-4 (Caenorhabditis elegans).